A 954-amino-acid polypeptide reads, in one-letter code: Regulatory protein FlaEY (954 aa).

Functions in trans to modulate the level of transcription of the flagellin genes and several genes encoding chemotaxis functions. It is itself temporally controlled. This chain is Regulatory protein FlaEY (flaEY), found in Caulobacter vibrioides (strain ATCC 19089 / CIP 103742 / CB 15) (Caulobacter crescentus).